The chain runs to 262 residues: Nurim (262 aa).

At 1 to 4 (MAPA) the chain is on the nuclear side. Residues 5-28 (LLLVPAALASFILAFGTGVEFVRF) form a helical membrane-spanning segment. The Perinuclear space portion of the chain corresponds to 29-58 (TSLRPLLGGIPESGGPDARHGWLAALQDRS). Residues 59–80 (ILASLAWDLCLLLLFVVQHSLM) traverse the membrane as a helical segment. Topologically, residues 81–97 (ATEAVKAWTSRYFGVLQ) are nuclear. A helical transmembrane segment spans residues 98–114 (RSLYVACTALALQLVMR). Residues 115–133 (YWETTPRGPVLWEARAEPW) are Perinuclear space-facing. Residues 134-164 (ATWVPLLCFVLHVVSWLLIFSILLVFDYAEL) traverse the membrane as a helical segment. The Nuclear portion of the chain corresponds to 165 to 191 (MGLKQVYYHVLGLGEPLSLKSPRALRL). The helical transmembrane segment at 192–210 (FSHLRHPVCVELLTVLWVV) threads the bilayer. Over 211–216 (PTLGTD) the chain is Perinuclear space. Residues 217-234 (RLLLALLFTLYLGLAHGL) traverse the membrane as a helical segment. Over 235–262 (DQQDLRYLRSQLQRKLHLLSRPQDGEAE) the chain is Nuclear.

The protein belongs to the nurim family.

The protein localises to the nucleus inner membrane. The chain is Nurim (Nrm) from Mus musculus (Mouse).